A 710-amino-acid polypeptide reads, in one-letter code: Polyribonucleotide nucleotidyltransferase (710 aa).

Residues Asp489 and Asp495 each contribute to the Mg(2+) site. A KH domain is found at 556–615 (PKIDTIKIDVDKIKVVIGKGGETIDKIIAETGVKIDIDDEGNVSIYSSDQAAIDRTKEII). The 69-residue stretch at 625–693 (GEVYHAKVIR…EKGRVDASMK (69 aa)) folds into the S1 motif domain. Residues 691–710 (SMKALIPRPPKPEKKEEKHD) form a disordered region. The segment covering 700-710 (PKPEKKEEKHD) has biased composition (basic and acidic residues).

Belongs to the polyribonucleotide nucleotidyltransferase family. The cofactor is Mg(2+).

Its subcellular location is the cytoplasm. It carries out the reaction RNA(n+1) + phosphate = RNA(n) + a ribonucleoside 5'-diphosphate. In terms of biological role, involved in mRNA degradation. Catalyzes the phosphorolysis of single-stranded polyribonucleotides processively in the 3'- to 5'-direction. The polypeptide is Polyribonucleotide nucleotidyltransferase (Streptococcus pyogenes serotype M18 (strain MGAS8232)).